The following is a 178-amino-acid chain: 2-C-methyl-D-erythritol 2,4-cyclodiphosphate synthase (178 aa).

Positions 24, 26, and 61 each coordinate a divalent metal cation. Residue 24–26 participates in 4-CDP-2-C-methyl-D-erythritol 2-phosphate binding; that stretch reads DSH. A 4-CDP-2-C-methyl-D-erythritol 2-phosphate-binding site is contributed by 150 to 153; sequence TSGE.

The protein belongs to the IspF family. Homotrimer. A divalent metal cation is required as a cofactor.

It carries out the reaction 4-CDP-2-C-methyl-D-erythritol 2-phosphate = 2-C-methyl-D-erythritol 2,4-cyclic diphosphate + CMP. It participates in isoprenoid biosynthesis; isopentenyl diphosphate biosynthesis via DXP pathway; isopentenyl diphosphate from 1-deoxy-D-xylulose 5-phosphate: step 4/6. Functionally, involved in the biosynthesis of isopentenyl diphosphate (IPP) and dimethylallyl diphosphate (DMAPP), two major building blocks of isoprenoid compounds. Catalyzes the conversion of 4-diphosphocytidyl-2-C-methyl-D-erythritol 2-phosphate (CDP-ME2P) to 2-C-methyl-D-erythritol 2,4-cyclodiphosphate (ME-CPP) with a corresponding release of cytidine 5-monophosphate (CMP). In Chlamydia trachomatis serovar L2 (strain ATCC VR-902B / DSM 19102 / 434/Bu), this protein is 2-C-methyl-D-erythritol 2,4-cyclodiphosphate synthase.